A 538-amino-acid chain; its full sequence is Bifunctional purine biosynthesis protein PurH (538 aa).

An MGS-like domain is found at 6 to 158 (KHIPAPDLHR…KNHAYVATVV (153 aa)).

It belongs to the PurH family.

The enzyme catalyses (6R)-10-formyltetrahydrofolate + 5-amino-1-(5-phospho-beta-D-ribosyl)imidazole-4-carboxamide = 5-formamido-1-(5-phospho-D-ribosyl)imidazole-4-carboxamide + (6S)-5,6,7,8-tetrahydrofolate. It catalyses the reaction IMP + H2O = 5-formamido-1-(5-phospho-D-ribosyl)imidazole-4-carboxamide. It participates in purine metabolism; IMP biosynthesis via de novo pathway; 5-formamido-1-(5-phospho-D-ribosyl)imidazole-4-carboxamide from 5-amino-1-(5-phospho-D-ribosyl)imidazole-4-carboxamide (10-formyl THF route): step 1/1. Its pathway is purine metabolism; IMP biosynthesis via de novo pathway; IMP from 5-formamido-1-(5-phospho-D-ribosyl)imidazole-4-carboxamide: step 1/1. The protein is Bifunctional purine biosynthesis protein PurH of Brucella abortus (strain S19).